A 427-amino-acid polypeptide reads, in one-letter code: L-rhamnose isomerase (427 aa).

Mn(2+)-binding residues include His-264, Asp-296, and Asp-298.

It belongs to the rhamnose isomerase family. The cofactor is Mn(2+).

The protein localises to the cytoplasm. It carries out the reaction L-rhamnopyranose = L-rhamnulose. Its pathway is carbohydrate degradation; L-rhamnose degradation; glycerone phosphate from L-rhamnose: step 1/3. Catalyzes the interconversion of L-rhamnose and L-rhamnulose. This Rhodopirellula baltica (strain DSM 10527 / NCIMB 13988 / SH1) protein is L-rhamnose isomerase.